The following is a 608-amino-acid chain: Probable Ufm1-specific protease 2 (608 aa).

Catalysis depends on residues cysteine 441, aspartate 565, and histidine 567.

This sequence belongs to the peptidase C78 family.

In terms of biological role, thiol protease which recognizes and hydrolyzes the peptide bond at the C-terminal Gly of UFM1, a ubiquitin-like modifier protein bound to a number of target proteins. Does not hydrolyze SUMO1 or ISG15 ubiquitin-like proteins. This Drosophila pseudoobscura pseudoobscura (Fruit fly) protein is Probable Ufm1-specific protease 2.